Consider the following 179-residue polypeptide: Sodium/potassium-transporting ATPase subunit beta-1-interacting protein 3 (179 aa).

A run of 4 helical transmembrane segments spans residues 5–22, 35–55, 62–82, and 151–171; these read TGRC…LVAL, APIL…FGTI, IVAY…IICF, and AVQI…ISVI.

This sequence belongs to the NKAIN family. In terms of assembly, interacts with atp1b1 C-terminus.

The protein localises to the cell membrane. This is Sodium/potassium-transporting ATPase subunit beta-1-interacting protein 3 (nkain3) from Xenopus laevis (African clawed frog).